We begin with the raw amino-acid sequence, 86 residues long: MRALLARLLLCVLVVSDSKGLVSTIESRTSGDGADNFDVVSCNKNCTSGQNECPEGCFCGLLGQNKKGHCYKIIGNLSGEPPVVRR.

The N-terminal stretch at 1–20 is a signal peptide; the sequence is MRALLARLLLCVLVVSDSKG. Intrachain disulfides connect C42–C57, C46–C59, and C53–C70. Residue N45 is glycosylated (N-linked (GlcNAc...) asparagine). N76 is a glycosylation site (N-linked (GlcNAc...) asparagine).

Monomer.

Its subcellular location is the secreted. Its function is as follows. Salivary chemokine-binding protein which shows chemokine neutralizing activity and binds to host chemokines CXCL1, CXCL2, CXCL3, CXCL5, CXCL6 and CXCL8. Binds to CXCL8 with 1:1 stoichiometry. Disrupts CXCL8 homodimer formation, disrupts the glycosaminoglycan-binding site of CXCL8 and inhibits the interaction of CXCL8 with CXCR2. This Rhipicephalus sanguineus (Brown dog tick) protein is Evasin-3.